A 233-amino-acid polypeptide reads, in one-letter code: Zinc import ATP-binding protein ZnuC (233 aa).

Residues 6–222 form the ABC transporter domain; the sequence is IEFRNVSKKF…SEFSNALSSL (217 aa). 38-45 contacts ATP; sequence GPNGAGKT.

Belongs to the ABC transporter superfamily. Zinc importer (TC 3.A.1.15.5) family. In terms of assembly, the complex is composed of two ATP-binding proteins (ZnuC), two transmembrane proteins (ZnuB) and a solute-binding protein (ZnuA).

The protein localises to the cell inner membrane. It carries out the reaction Zn(2+)(out) + ATP(in) + H2O(in) = Zn(2+)(in) + ADP(in) + phosphate(in) + H(+)(in). Functionally, part of the ABC transporter complex ZnuABC involved in zinc import. Responsible for energy coupling to the transport system. The sequence is that of Zinc import ATP-binding protein ZnuC from Rickettsia prowazekii (strain Madrid E).